Here is a 282-residue protein sequence, read N- to C-terminus: Benzoyl-CoA reductase subunit D (282 aa).

[4Fe-4S] cluster-binding residues include Cys-130 and Cys-169.

In terms of assembly, heterotetramer composed of A, B, C, and D subunits. It depends on [4Fe-4S] cluster as a cofactor.

It catalyses the reaction cyclohexa-1,5-diene-1-carbonyl-CoA + oxidized 2[4Fe-4S]-[ferredoxin] + 2 ADP + 2 phosphate = reduced 2[4Fe-4S]-[ferredoxin] + benzoyl-CoA + 2 ATP + 2 H2O. The enzyme catalyses 3-hydroxybenzoyl-CoA + AH2 + 2 ATP + 2 H2O = 3-hydroxycyclohexa-1,5-diene-1-carbonyl-CoA + A + 2 ADP + 2 phosphate + 2 H(+). Catalyzes the anaerobic reduction of benzoyl-CoA and 3-hydroxybenzoyl-CoA to form cyclohexa-1,5-diene-1-carbonyl-CoA and 3-hydroxycyclohexa-1,5-diene-1-carbonyl-CoA, respectively. The enzyme also reduces other benzoyl-CoA analogs with small substituents at the aromatic ring. The protein is Benzoyl-CoA reductase subunit D (bcrD) of Thauera aromatica.